A 466-amino-acid chain; its full sequence is Soluble pyridine nucleotide transhydrogenase (466 aa).

Residue 36-45 coordinates FAD; it reads ERYNNVGGGC.

The protein belongs to the class-I pyridine nucleotide-disulfide oxidoreductase family. The cofactor is FAD.

It localises to the cytoplasm. The catalysed reaction is NAD(+) + NADPH = NADH + NADP(+). Functionally, conversion of NADPH, generated by peripheral catabolic pathways, to NADH, which can enter the respiratory chain for energy generation. The polypeptide is Soluble pyridine nucleotide transhydrogenase (Yersinia enterocolitica serotype O:8 / biotype 1B (strain NCTC 13174 / 8081)).